The chain runs to 225 residues: Biosynthetic peptidoglycan transglycosylase (225 aa).

A helical transmembrane segment spans residues 8–28 (VLLIFIGAILFIQLWIFSSLV).

This sequence belongs to the glycosyltransferase 51 family.

It localises to the cell inner membrane. The catalysed reaction is [GlcNAc-(1-&gt;4)-Mur2Ac(oyl-L-Ala-gamma-D-Glu-L-Lys-D-Ala-D-Ala)](n)-di-trans,octa-cis-undecaprenyl diphosphate + beta-D-GlcNAc-(1-&gt;4)-Mur2Ac(oyl-L-Ala-gamma-D-Glu-L-Lys-D-Ala-D-Ala)-di-trans,octa-cis-undecaprenyl diphosphate = [GlcNAc-(1-&gt;4)-Mur2Ac(oyl-L-Ala-gamma-D-Glu-L-Lys-D-Ala-D-Ala)](n+1)-di-trans,octa-cis-undecaprenyl diphosphate + di-trans,octa-cis-undecaprenyl diphosphate + H(+). Its pathway is cell wall biogenesis; peptidoglycan biosynthesis. Its function is as follows. Peptidoglycan polymerase that catalyzes glycan chain elongation from lipid-linked precursors. In Acinetobacter baumannii (strain ATCC 17978 / DSM 105126 / CIP 53.77 / LMG 1025 / NCDC KC755 / 5377), this protein is Biosynthetic peptidoglycan transglycosylase.